Reading from the N-terminus, the 171-residue chain is Putative ankyrin repeat protein PA3287 (171 aa).

ANK repeat units lie at residues 48–77, 81–110, and 114–143; these read KGDS…DPDL, AGQT…DVEG, and DGKT…RRDA.

This Pseudomonas aeruginosa (strain ATCC 15692 / DSM 22644 / CIP 104116 / JCM 14847 / LMG 12228 / 1C / PRS 101 / PAO1) protein is Putative ankyrin repeat protein PA3287.